A 258-amino-acid chain; its full sequence is Adenylate kinase (258 aa).

52–57 (GAGKGT) contacts ATP. Positions 72-101 (ATGDMLRSQVAKKTELGKEAKKIMDQGGLV) are NMP. Residues Thr-73, Arg-78, 99–101 (GLV), 128–131 (GFPR), and Gln-135 contribute to the AMP site. The tract at residues 169-206 (GRLVHPASGRSYHKVFNPPKQEMKDDITGEPLIQRSDD) is LID. Residues Arg-170 and 179-180 (SY) each bind ATP. 2 residues coordinate AMP: Arg-203 and Arg-214. ATP is bound at residue Gln-242.

This sequence belongs to the adenylate kinase family. AK2 subfamily. As to quaternary structure, monomer.

It is found in the cytoplasm. Its subcellular location is the cytosol. The protein resides in the mitochondrion intermembrane space. The catalysed reaction is AMP + ATP = 2 ADP. Catalyzes the reversible transfer of the terminal phosphate group between ATP and AMP. Plays an important role in cellular energy homeostasis and in adenine nucleotide metabolism. Adenylate kinase activity is critical for regulation of the phosphate utilization and the AMP de novo biosynthesis pathways. The protein is Adenylate kinase (adk1) of Aspergillus oryzae (strain ATCC 42149 / RIB 40) (Yellow koji mold).